A 512-amino-acid chain; its full sequence is Glucose-1-phosphate adenylyltransferase small subunit 2, chloroplastic (512 aa).

Residues 1 to 21 (MAAIGVLKVPPSSSSSSSSSS) form a disordered region. A chloroplast-targeting transit peptide spans 1 to 63 (MAAIGVLKVP…RNPFIVSPKA (63 aa)). Over residues 12-21 (SSSSSSSSSS) the composition is skewed to low complexity.

The protein belongs to the bacterial/plant glucose-1-phosphate adenylyltransferase family. As to quaternary structure, heterotetramer. Leaves and seeds.

It is found in the plastid. The protein localises to the chloroplast. The enzyme catalyses alpha-D-glucose 1-phosphate + ATP + H(+) = ADP-alpha-D-glucose + diphosphate. The protein operates within glycan biosynthesis; starch biosynthesis. With respect to regulation, activated by 3'phosphoglycerate, inhibited by orthophosphate. Allosteric regulation. Its function is as follows. This protein plays a role in synthesis of starch. It catalyzes the synthesis of the activated glycosyl donor, ADP-glucose from Glc-1-P and ATP. This is Glucose-1-phosphate adenylyltransferase small subunit 2, chloroplastic (AGPP) from Vicia faba (Broad bean).